The primary structure comprises 667 residues: Probable endo-1,3(4)-beta-glucanase AFLA_105200 (667 aa).

The N-terminal stretch at 1–24 (MSSSSFVWTVGSIALSSLITPTIA) is a signal peptide. In terms of domain architecture, GH16 spans 25-288 (DGSGSRYQLT…WAGGVFGDSG (264 aa)). An N-linked (GlcNAc...) asparagine glycan is attached at asparagine 63. The active-site Nucleophile is glutamate 144. Glutamate 149 serves as the catalytic Proton donor. 2 stretches are compositionally biased toward polar residues: residues 354-363 (VPSVTSTPIL) and 379-394 (ATSSAVPEPANPQTSV). 2 disordered regions span residues 354–427 (VPSV…ADAV) and 448–646 (GTIQ…AGAS). 3 stretches are compositionally biased toward low complexity: residues 395–427 (AGAETTAAPAPSPETTAAPASPSSDDSEGADAV), 448–483 (GTIQTIGGGETEVSPASSTVESAATPAAPTPTSQEP), and 574–622 (APTS…EATA). Polar residues predominate over residues 623–637 (PTETDSGASTGTNPE). A lipid anchor (GPI-anchor amidated glycine) is attached at glycine 644. Positions 645–667 (ASKSVGISGLAGIVCGIAMAMLA) are cleaved as a propeptide — removed in mature form.

The protein belongs to the glycosyl hydrolase 16 family.

It localises to the cell membrane. The catalysed reaction is Endohydrolysis of (1-&gt;3)- or (1-&gt;4)-linkages in beta-D-glucans when the glucose residue whose reducing group is involved in the linkage to be hydrolyzed is itself substituted at C-3.. Its function is as follows. Mixed-linked glucanase involved in the degradation of complex natural cellulosic substrates. The sequence is that of Probable endo-1,3(4)-beta-glucanase AFLA_105200 from Aspergillus flavus (strain ATCC 200026 / FGSC A1120 / IAM 13836 / NRRL 3357 / JCM 12722 / SRRC 167).